A 480-amino-acid polypeptide reads, in one-letter code: Siroheme synthase 1 (480 aa).

Residues 1-203 (MNYLPIFADL…GQLEQAEGEL (203 aa)) form a precorrin-2 dehydrogenase /sirohydrochlorin ferrochelatase region. Residues 22 to 23 (EV) and 43 to 44 (LA) contribute to the NAD(+) site. The residue at position 128 (serine 128) is a Phosphoserine. The segment at 222-480 (GEVALVGAGP…DSRPAVVNLA (259 aa)) is uroporphyrinogen-III C-methyltransferase. S-adenosyl-L-methionine is bound at residue proline 231. Aspartate 254 acts as the Proton acceptor in catalysis. The active-site Proton donor is the lysine 276. Residues 307–309 (GGD), isoleucine 312, 337–338 (TA), methionine 389, and glycine 418 contribute to the S-adenosyl-L-methionine site.

It in the N-terminal section; belongs to the precorrin-2 dehydrogenase / sirohydrochlorin ferrochelatase family. In the C-terminal section; belongs to the precorrin methyltransferase family.

It carries out the reaction uroporphyrinogen III + 2 S-adenosyl-L-methionine = precorrin-2 + 2 S-adenosyl-L-homocysteine + H(+). The enzyme catalyses precorrin-2 + NAD(+) = sirohydrochlorin + NADH + 2 H(+). The catalysed reaction is siroheme + 2 H(+) = sirohydrochlorin + Fe(2+). The protein operates within cofactor biosynthesis; adenosylcobalamin biosynthesis; precorrin-2 from uroporphyrinogen III: step 1/1. It functions in the pathway cofactor biosynthesis; adenosylcobalamin biosynthesis; sirohydrochlorin from precorrin-2: step 1/1. It participates in porphyrin-containing compound metabolism; siroheme biosynthesis; precorrin-2 from uroporphyrinogen III: step 1/1. Its pathway is porphyrin-containing compound metabolism; siroheme biosynthesis; siroheme from sirohydrochlorin: step 1/1. The protein operates within porphyrin-containing compound metabolism; siroheme biosynthesis; sirohydrochlorin from precorrin-2: step 1/1. Multifunctional enzyme that catalyzes the SAM-dependent methylations of uroporphyrinogen III at position C-2 and C-7 to form precorrin-2 via precorrin-1. Then it catalyzes the NAD-dependent ring dehydrogenation of precorrin-2 to yield sirohydrochlorin. Finally, it catalyzes the ferrochelation of sirohydrochlorin to yield siroheme. In Pectobacterium atrosepticum (strain SCRI 1043 / ATCC BAA-672) (Erwinia carotovora subsp. atroseptica), this protein is Siroheme synthase 1.